The chain runs to 366 residues: Chorismate synthase (366 aa).

The NADP(+) site is built by arginine 48 and arginine 54. FMN-binding positions include 132 to 134 (RSS), 244 to 245 (NA), glycine 289, 304 to 308 (KPTSS), and arginine 330.

It belongs to the chorismate synthase family. In terms of assembly, homotetramer. FMNH2 serves as cofactor.

The catalysed reaction is 5-O-(1-carboxyvinyl)-3-phosphoshikimate = chorismate + phosphate. It participates in metabolic intermediate biosynthesis; chorismate biosynthesis; chorismate from D-erythrose 4-phosphate and phosphoenolpyruvate: step 7/7. In terms of biological role, catalyzes the anti-1,4-elimination of the C-3 phosphate and the C-6 proR hydrogen from 5-enolpyruvylshikimate-3-phosphate (EPSP) to yield chorismate, which is the branch point compound that serves as the starting substrate for the three terminal pathways of aromatic amino acid biosynthesis. This reaction introduces a second double bond into the aromatic ring system. This is Chorismate synthase from Methylobacterium radiotolerans (strain ATCC 27329 / DSM 1819 / JCM 2831 / NBRC 15690 / NCIMB 10815 / 0-1).